We begin with the raw amino-acid sequence, 294 residues long: Undecaprenyl-diphosphatase (294 aa).

Helical transmembrane passes span 39–59, 93–113, 123–143, 198–218, 232–252, and 268–288; these read PGAAFTAIIQIGTELAVILYF, ATLGWNIIVGSIPIIILGFTL, NLWITVTVLLVFGILLWMVDA, SFLMAIPAVFGSGLLEAIKAV, PTLVAMVISFVLGYIVIIGFL, and IGLAVVVALLLIVGVLPAIDP.

The protein belongs to the UppP family.

The protein localises to the cell membrane. The catalysed reaction is di-trans,octa-cis-undecaprenyl diphosphate + H2O = di-trans,octa-cis-undecaprenyl phosphate + phosphate + H(+). Its function is as follows. Catalyzes the dephosphorylation of undecaprenyl diphosphate (UPP). Confers resistance to bacitracin. The sequence is that of Undecaprenyl-diphosphatase from Bifidobacterium longum (strain DJO10A).